Reading from the N-terminus, the 151-residue chain is MIFFMFNMNINSPVRFVKETNRAKSPTRQSPGAAGYDLYSAYDYTIPPGERQLIKTDISMSMPKFCYGRIAPRSGLSLKGIDIGGGVIDEDYRGSIGVILINNGKCTFNVNTGDRIAQLIYQRIYYPELEEVQSLDSTDRGDQGFGSTGLR.

R28 contributes to the Mg(2+) binding site. Residues 72–74 (PRS), 86–89 (GVID), Y92, G97, I99, and R115 each bind dUTP.

The protein belongs to the dUTPase family. It depends on Mg(2+) as a cofactor.

The enzyme catalyses dUTP + H2O = dUMP + diphosphate + H(+). In terms of biological role, this enzyme is involved in nucleotide metabolism: it produces dUMP, the immediate precursor of thymidine nucleotides and it decreases the intracellular concentration of dUTP so that uracil cannot be incorporated into DNA. This Monkeypox virus protein is Deoxyuridine 5'-triphosphate nucleotidohydrolase (OPG046).